The chain runs to 349 residues: Probable esterase Cgl0839 (349 aa).

Residues 60 to 329 enclose the AB hydrolase-1 domain; it reads GTHQTWFQQY…EDIAGHLGLF (270 aa). Ser142 acts as the Nucleophile in catalysis. Active-site residues include Asp296 and His325.

Belongs to the AB hydrolase superfamily. Acetyl esterase family. Homodimer.

Functionally, esterase that catalyzes the hydrolysis of 4-nitrophenyl acetate in vitro. This chain is Probable esterase Cgl0839, found in Corynebacterium glutamicum (strain ATCC 13032 / DSM 20300 / JCM 1318 / BCRC 11384 / CCUG 27702 / LMG 3730 / NBRC 12168 / NCIMB 10025 / NRRL B-2784 / 534).